The following is a 722-amino-acid chain: Zinc finger BED domain-containing protein RICESLEEPER 1 (722 aa).

The BED-type zinc finger occupies 66 to 126 (RKKSLVWEHF…GSCPKIKNQE (61 aa)). 4 residues coordinate Zn(2+): Cys-89, Cys-92, His-113, and Cys-119. Positions 572–592 (VEQGGGNNAPASENSTQATAP) are disordered. Over residues 580-592 (APASENSTQATAP) the composition is skewed to polar residues. The HATC (Hobo-Ac-Tam3) domain stretch occupies residues 617 to 702 (ELEQYLDESL…EALVCAKDWL (86 aa)).

In terms of assembly, homodimer.

It is found in the nucleus. Functionally, transposase-like protein that is essential for plant growth and development. May regulate global gene expression by recruiting other cellular factors. The polypeptide is Zinc finger BED domain-containing protein RICESLEEPER 1 (Oryza sativa subsp. japonica (Rice)).